Here is a 272-residue protein sequence, read N- to C-terminus: MNKIFAAFKPRGLSSNAFLSTLKKKYKNKKAGYSGTLDPFAKGVLIVAFGQYTKLFRFLKKTPKTYKATLWLGVYSLSLDDQNIKEIKNIKEFDLANLQQIIDQMQGIISYTPPQFSAKRINGTRAYELAKKGIEANLKPCQMEVFDCKILSYNHPFLNIEITVSEGAYIRSYCELFARKLGINATLSSLERIKEGKFVYNNEKSLNVLKYINLKPNFIKDLNKLENGAKIFVEELKFHDEGDYYIETEKYFSIINIKENTVKYLLNKVEKC.

Aspartate 38 acts as the Nucleophile in catalysis.

Belongs to the pseudouridine synthase TruB family. Type 1 subfamily.

The enzyme catalyses uridine(55) in tRNA = pseudouridine(55) in tRNA. Functionally, responsible for synthesis of pseudouridine from uracil-55 in the psi GC loop of transfer RNAs. The polypeptide is tRNA pseudouridine synthase B (Campylobacter jejuni subsp. jejuni serotype O:6 (strain 81116 / NCTC 11828)).